The following is a 163-amino-acid chain: MRRLKQIIKSFTLWELLKGLSLTLRYFYRKKVTIHYPDEEVPSSFRFRGMLALRRYPNGEERCIACKLCEAVCPACAITIEAGPREADGSRRTTLYDIDAFKCINCGFCEEACPVDAIVLTPEMHYSIKDRGENILTKEKLLMIGDRYEEQIARDRAKDKKYR.

4Fe-4S ferredoxin-type domains lie at 53 to 83 and 94 to 123; these read LRRY…IEAG and TLYD…LTPE. Cys63, Cys66, Cys69, Cys73, Cys103, Cys106, Cys109, and Cys113 together coordinate [4Fe-4S] cluster.

This sequence belongs to the complex I 23 kDa subunit family. In terms of assembly, NDH-1 is composed of 14 different subunits. Subunits NuoA, H, J, K, L, M, N constitute the membrane sector of the complex. [4Fe-4S] cluster is required as a cofactor.

The protein resides in the cell inner membrane. It catalyses the reaction a quinone + NADH + 5 H(+)(in) = a quinol + NAD(+) + 4 H(+)(out). Its function is as follows. NDH-1 shuttles electrons from NADH, via FMN and iron-sulfur (Fe-S) centers, to quinones in the respiratory chain. The immediate electron acceptor for the enzyme in this species is believed to be ubiquinone. Couples the redox reaction to proton translocation (for every two electrons transferred, four hydrogen ions are translocated across the cytoplasmic membrane), and thus conserves the redox energy in a proton gradient. The polypeptide is NADH-quinone oxidoreductase subunit I (Coxiella burnetii (strain Dugway 5J108-111)).